Here is a 444-residue protein sequence, read N- to C-terminus: Acyl-CoA 6-desaturase (444 aa).

Over 1 to 130 (MGGGGQQTDR…EAEGCFKTQP (130 aa)) the chain is Cytoplasmic. The Cytochrome b5 heme-binding domain maps to 18 to 95 (FSSYTWEEVQ…LKPLLIGELE (78 aa)). Residues 131–151 (LFFALHLGHILLLEAIAFMMV) traverse the membrane as a helical segment. Residues 152–157 (WYFGTG) lie on the Lumenal side of the membrane. The helical transmembrane segment at 158 to 178 (WINTLIVAVILATAQSQAGWL) threads the bilayer. At 179-264 (QHDFGHLSVF…KHLPYNHQHK (86 aa)) the chain is on the cytoplasmic side. The Histidine box-1 motif lies at 180 to 184 (HDFGH). The Histidine box-2 motif lies at 217–221 (HFQHH). The chain crosses the membrane as a helical span at residues 265–285 (YFFFIGPPLLIPVYFQFQIFH). The Lumenal segment spans residues 286 to 305 (NMISHGMWVDLLWCISYYVR). Residues 306–326 (YFLCYTQFYGVFWAIILFNFV) form a helical membrane-spanning segment. The Cytoplasmic segment spans residues 327–444 (RFMESHWFVW…ELWLDAYLNK (118 aa)). The Histidine box-3 motif lies at 382 to 386 (QIEHH).

The protein belongs to the fatty acid desaturase type 1 family.

It is found in the endoplasmic reticulum membrane. It carries out the reaction (9Z,12Z)-octadecadienoyl-CoA + 2 Fe(II)-[cytochrome b5] + O2 + 2 H(+) = (6Z,9Z,12Z)-octadecatrienoyl-CoA + 2 Fe(III)-[cytochrome b5] + 2 H2O. The catalysed reaction is (9Z,12Z,15Z)-octadecatrienoyl-CoA + 2 Fe(II)-[cytochrome b5] + O2 + 2 H(+) = (6Z,9Z,12Z,15Z)-octadecatetraenoyl-CoA + 2 Fe(III)-[cytochrome b5] + 2 H2O. It catalyses the reaction (8Z,11Z,14Z,17Z)-eicosatetraenoyl-CoA + 2 Fe(II)-[cytochrome b5] + O2 + 2 H(+) = (5Z,8Z,11Z,14Z,17Z)-eicosapentaenoyl-CoA + 2 Fe(III)-[cytochrome b5] + 2 H2O. The enzyme catalyses (8Z,11Z,14Z)-eicosatrienoyl-CoA + 2 Fe(II)-[cytochrome b5] + O2 + 2 H(+) = (5Z,8Z,11Z,14Z)-eicosatetraenoyl-CoA + 2 Fe(III)-[cytochrome b5] + 2 H2O. It functions in the pathway lipid metabolism; polyunsaturated fatty acid biosynthesis. Fatty acid desaturase with bifunctional delta-5 and delta-6 activities. Component of a lipid metabolic pathway that catalyzes the biosynthesis of polyunsaturated fatty acids (PUFA) with preference toward n-3 substrates and Delta-6 function. The chain is Acyl-CoA 6-desaturase (fads2) from Danio rerio (Zebrafish).